The chain runs to 727 residues: Fatty acid oxidation complex subunit alpha (727 aa).

The tract at residues 1-200 is enoyl-CoA hydratase; that stretch reads MNDQQPFSAI…RQGLVDEAVP (200 aa). The 3-hydroxyacyl-CoA dehydrogenase stretch occupies residues 316 to 727; that stretch reads KPIHYVGILG…PPTDEDDSAS (412 aa).

This sequence in the N-terminal section; belongs to the enoyl-CoA hydratase/isomerase family. The protein in the central section; belongs to the 3-hydroxyacyl-CoA dehydrogenase family. In terms of assembly, heterotetramer of two alpha chains (FadJ) and two beta chains (FadI).

Its subcellular location is the cytoplasm. The catalysed reaction is a (3S)-3-hydroxyacyl-CoA = a (2E)-enoyl-CoA + H2O. It carries out the reaction a 4-saturated-(3S)-3-hydroxyacyl-CoA = a (3E)-enoyl-CoA + H2O. It catalyses the reaction a (3S)-3-hydroxyacyl-CoA + NAD(+) = a 3-oxoacyl-CoA + NADH + H(+). The enzyme catalyses (3S)-3-hydroxybutanoyl-CoA = (3R)-3-hydroxybutanoyl-CoA. It participates in lipid metabolism; fatty acid beta-oxidation. Catalyzes the formation of a hydroxyacyl-CoA by addition of water on enoyl-CoA. Also exhibits 3-hydroxyacyl-CoA epimerase and 3-hydroxyacyl-CoA dehydrogenase activities. This is Fatty acid oxidation complex subunit alpha from Pectobacterium carotovorum subsp. carotovorum (strain PC1).